Reading from the N-terminus, the 270-residue chain is Interleukin-1 beta (270 aa).

A propeptide spanning residues 1–118 (MATVPEPTSE…VYDDDAFVCD (118 aa)) is cleaved from the precursor.

Belongs to the IL-1 family. Monomer. In its precursor form, weakly interacts with full-length MEFV; the mature cytokine does not interact at all. Interacts with integrins ITGAV:ITGBV and ITGA5:ITGB1; integrin-binding is required for IL1B signaling. Interacts with cargo receptor TMED10; the interaction is direct and is required for the secretion of IL1B mature form. Interacts with HSP90AB1; the interaction facilitates cargo translocation into the ERGIC. Interacts with HSP90B1; the interaction facilitates cargo translocation into the ERGIC.

The protein resides in the cytoplasm. The protein localises to the cytosol. It is found in the secreted. It localises to the lysosome. Its subcellular location is the extracellular exosome. Its function is as follows. Potent pro-inflammatory cytokine. Initially discovered as the major endogenous pyrogen, induces prostaglandin synthesis, neutrophil influx and activation, T-cell activation and cytokine production, B-cell activation and antibody production, and fibroblast proliferation and collagen production. Promotes Th17 differentiation of T-cells. Synergizes with IL12/interleukin-12 to induce IFNG synthesis from T-helper 1 (Th1) cells. Plays a role in angiogenesis by inducing VEGF production synergistically with TNF and IL6. Involved in transduction of inflammation downstream of pyroptosis: its mature form is specifically released in the extracellular milieu by passing through the gasdermin-D (GSDMD) pore. This Eumetopias jubatus (Steller sea lion) protein is Interleukin-1 beta (IL1B).